A 467-amino-acid polypeptide reads, in one-letter code: 3-isopropylmalate dehydratase large subunit (467 aa).

C348, C409, and C412 together coordinate [4Fe-4S] cluster. A disordered region spans residues 423 to 449; it reads NERSISTSNRNFEGRQGKGSRTHLASP.

It belongs to the aconitase/IPM isomerase family. LeuC type 1 subfamily. As to quaternary structure, heterodimer of LeuC and LeuD. Requires [4Fe-4S] cluster as cofactor.

It catalyses the reaction (2R,3S)-3-isopropylmalate = (2S)-2-isopropylmalate. The protein operates within amino-acid biosynthesis; L-leucine biosynthesis; L-leucine from 3-methyl-2-oxobutanoate: step 2/4. Functionally, catalyzes the isomerization between 2-isopropylmalate and 3-isopropylmalate, via the formation of 2-isopropylmaleate. This is 3-isopropylmalate dehydratase large subunit from Bifidobacterium longum subsp. infantis (strain ATCC 15697 / DSM 20088 / JCM 1222 / NCTC 11817 / S12).